Consider the following 454-residue polypeptide: Transmembrane protease serine 3 (454 aa).

The Cytoplasmic portion of the chain corresponds to 1–48; it reads MGENDPPAVEAPFSFRSLFGLDDLKISPVAPDADAVAAQILSLLPLKF. The helical; Signal-anchor for type II membrane protein transmembrane segment at 49 to 69 threads the bilayer; that stretch reads FPIIVIGIIALILALAIGLGI. The Extracellular portion of the chain corresponds to 70–454; the sequence is HFDCSGKYRC…HEQMERDLKT (385 aa). Residues 72–108 form the LDL-receptor class A domain; the sequence is DCSGKYRCRSSFKCIELIARCDGVSDCKDGEDEYRCV. Cystine bridges form between C73-C85, C79-C98, C92-C107, C129-C194, C142-C204, C207-C324, C242-C258, C338-C407, C370-C386, and C397-C425. Positions 109-205 constitute an SRCR domain; it reads RVGGQNAVLQ…SGHVVTLQCT (97 aa). The 233-residue stretch at 217 to 449 folds into the Peptidase S1 domain; it reads IVGGNMSLLS…FLDWIHEQME (233 aa). N221 carries N-linked (GlcNAc...) asparagine glycosylation. Residues H257 and D304 each act as charge relay system in the active site. S401 serves as the catalytic Charge relay system.

It belongs to the peptidase S1 family. Post-translationally, undergoes autoproteolytic activation. In terms of tissue distribution, expressed in many tissues including fetal cochlea. Isoform T is found at increased levels in some carcinomas.

It is found in the endoplasmic reticulum membrane. Functionally, probable serine protease that plays a role in hearing. Acts as a permissive factor for cochlear hair cell survival and activation at the onset of hearing and is required for saccular hair cell survival. Activates ENaC (in vitro). The polypeptide is Transmembrane protease serine 3 (TMPRSS3) (Homo sapiens (Human)).